Consider the following 179-residue polypeptide: Large ribosomal subunit protein uL6 (179 aa).

It belongs to the universal ribosomal protein uL6 family. Part of the 50S ribosomal subunit.

This protein binds to the 23S rRNA, and is important in its secondary structure. It is located near the subunit interface in the base of the L7/L12 stalk, and near the tRNA binding site of the peptidyltransferase center. The protein is Large ribosomal subunit protein uL6 of Syntrophobacter fumaroxidans (strain DSM 10017 / MPOB).